We begin with the raw amino-acid sequence, 288 residues long: Killer cell lectin-like receptor 2 (288 aa).

The Cytoplasmic segment spans residues 1-45; sequence MSEQEVTYTTLRFHKSSGLQNPVRPEETQRPRDVGHRECSVPWKF. The chain crosses the membrane as a helical; Signal-anchor for type II membrane protein span at residues 46–66; that stretch reads IVIVLGILCFLLLLTVAVLVI. The Extracellular portion of the chain corresponds to 67-288; the sequence is HIFRDGQEKH…SALQRDEDES (222 aa). N-linked (GlcNAc...) asparagine glycans are attached at residues N94, N105, and N114. In terms of domain architecture, C-type lectin spans 144–263; it reads QVEGYWFCCG…THGCICEKRL (120 aa). 4 disulfide bridges follow: C151/C156, C169/C257, C173/C259, and C238/C251. The N-linked (GlcNAc...) asparagine glycan is linked to N177.

In terms of assembly, homodimer; disulfide-linked.

It localises to the membrane. In terms of biological role, receptor on natural killer (NK) cells for class I MHC. The polypeptide is Killer cell lectin-like receptor 2 (Klra2) (Mus musculus (Mouse)).